A 348-amino-acid polypeptide reads, in one-letter code: Mitogen-activated protein kinase kinase 5 (348 aa).

Disordered regions lie at residues 1 to 26 (MKPI…DLSL) and 35 to 54 (LAVP…PASS). S6 is subject to Phosphoserine; by ASK7. Residues 70–325 (LERVNRIGSG…AQQLLQHPFI (256 aa)) enclose the Protein kinase domain. ATP is bound by residues 76-84 (IGSGAGGTV) and K99. Residue D187 is the Proton acceptor of the active site. Position 215 is a phosphothreonine (T215). Phosphoserine; by ASK7 is present on S221. The residue at position 221 (S221) is a Phosphoserine. Phosphothreonine; by ASK7 is present on T225. R313 is modified (ADP-ribosylarginine; by HopF2).

Belongs to the protein kinase superfamily. STE Ser/Thr protein kinase family. MAP kinase kinase subfamily. As to quaternary structure, interacts with P.syringae type III effector HopF2. Interacts with BZR1. Interacts with MPK6 and MPK3. Interacts with RACK1A, RACK1B and RACK1C. Interacts with MAPKKK5 mainly in the cytosol. Binds to BASL. Interacts with MAPKKK20. In terms of processing, phosphorylation at Thr-215 and Ser-221 by MAP kinase kinase kinases positively regulates kinase activity. Phosphorylated by MAPKKK5 and MAPKKK20 in response to abscisic acid (ABA). Post-translationally, ADP-ribosylation at Arg-313 by P.syringae type III effector HopF2 reduces the ability of the protein to phosphorylate downstream MPK6. Expressed higher in stems and leaves than in flowers and roots.

The enzyme catalyses L-seryl-[protein] + ATP = O-phospho-L-seryl-[protein] + ADP + H(+). It catalyses the reaction L-threonyl-[protein] + ATP = O-phospho-L-threonyl-[protein] + ADP + H(+). It carries out the reaction L-tyrosyl-[protein] + ATP = O-phospho-L-tyrosyl-[protein] + ADP + H(+). With respect to regulation, activated through serine and threonine phosphorylation by MEKK1 and MAPKKK20 in response to abscisic acid (ABA). Inhibited through phosphorylation by GSK3/Shaggy-like kinase ASKs. Inhibited through ADP-Ribosylation by P.syringae HopF2. Activated after high light stress. Its function is as follows. Mitogen-activated protein kinase kinase (MAPKK) which regulates abscisic acid (ABA) responses in a MAPKKK20-MKK5-MPK6 cascade involved in root growth (e.g. root cell division and elongation) and stomatal response, probably via MAPK6 activation by protein phosphorylation. Involved in the second phase of hydrogen peroxide generation during hypersensitive response-like cell death. Involved in the innate immune MAP kinase signaling cascade (MEKK1, MKK4/MKK5 and MPK3/MPK6) downstream of bacterial flagellin receptor FLS2. Activates by phosphorylation the downstream MPK3 and MPK6. YDA-MKK4/MKK5-MPK3/MPK6 module regulates stomatal cell fate before the guard mother cell (GMC) is specified. This MAPK cascade also functions downstream of the ER receptor in regulating coordinated local cell proliferation, which shapes the morphology of plant organs. MKK4 and MKK5 participate in the regulation of floral organ abscission. Target of the Pseudomonas syringae type III effector HopF2, that inhibits the activation of the downstream MPK6 and PAMP-triggered immunity. Plays a critical role in high light stress tolerance by the mediation of the Cu/Zn SODs CSD1 and CSD2 gene expression. Phosphorylates BZR1 in vitro. The polypeptide is Mitogen-activated protein kinase kinase 5 (Arabidopsis thaliana (Mouse-ear cress)).